The following is a 581-amino-acid chain: Serine/threonine protein phosphatase 2A 55 kDa regulatory subunit B alpha isoform (581 aa).

The segment at 1–27 (MMNPDGGDGDRLEAAGAGSSSAQQGHP) is disordered. Low complexity predominate over residues 14 to 25 (AAGAGSSSAQQG). 2 WD repeats span residues 47–86 (QEVDIISAIEFDKSGDHLATGDRGGRVVLFERTDARDNAS) and 123–164 (EIEE…VKQV). Low complexity predominate over residues 172–189 (RSVGTGTSSSASTSSSRG). The tract at residues 172 to 192 (RSVGTGTSSSASTSSSRGLLP) is disordered. 4 WD repeats span residues 241–279 (AHDYHINSISTNSDGETYISADDLRINLWNLEINNQSFN), 290–330 (DLTE…LCDN), 349–387 (EIIASISDIKFSRDGRYILSRDYMTLKLWDLNMDSGPVS), and 492–530 (DFSTKLLHLAWHPTENSIACAAANSLYMYYARRCLRKFI).

It belongs to the phosphatase 2A regulatory subunit B family. In terms of assembly, PP2A consists of a common heteromeric enzyme, composed of a catalytic subunit (subunits C), a constant regulatory subunit (subunit A), and a variety of regulatory subunits such as subunits B (the R2/B/PR55/B55, R3/B''/PR72/PR130/PR59 and R5/B'/B56 families).

Functionally, the B regulatory subunit may modulate substrate selectivity and catalytic activity, and may also direct the localization of the catalytic enzyme to a particular subcellular compartment. This Oryza sativa subsp. japonica (Rice) protein is Serine/threonine protein phosphatase 2A 55 kDa regulatory subunit B alpha isoform.